The chain runs to 157 residues: Ribosome maturation factor RimP (157 aa).

The protein belongs to the RimP family.

Its subcellular location is the cytoplasm. Functionally, required for maturation of 30S ribosomal subunits. In Lactococcus lactis subsp. lactis (strain IL1403) (Streptococcus lactis), this protein is Ribosome maturation factor RimP.